The following is a 489-amino-acid chain: Betaine aldehyde dehydrogenase (489 aa).

2 residues coordinate K(+): Thr-26 and Asp-93. An NAD(+)-binding site is contributed by 150 to 152 (GAW). Lys-162 (charge relay system) is an active-site residue. 176-179 (KPSE) contacts NAD(+). Val-180 contributes to the K(+) binding site. 229–232 (GVET) contributes to the NAD(+) binding site. Residue Leu-245 participates in K(+) binding. The Proton acceptor role is filled by Glu-251. Residues Gly-253, Cys-285, and Glu-386 each coordinate NAD(+). Catalysis depends on Cys-285, which acts as the Nucleophile. Cysteine sulfenic acid (-SOH) is present on Cys-285. K(+) is bound by residues Lys-456 and Gly-459. Glu-463 acts as the Charge relay system in catalysis.

It belongs to the aldehyde dehydrogenase family. In terms of assembly, dimer of dimers. The cofactor is K(+).

The enzyme catalyses betaine aldehyde + NAD(+) + H2O = glycine betaine + NADH + 2 H(+). It functions in the pathway amine and polyamine biosynthesis; betaine biosynthesis via choline pathway; betaine from betaine aldehyde: step 1/1. Its function is as follows. Involved in the biosynthesis of the osmoprotectant glycine betaine. Catalyzes the irreversible oxidation of betaine aldehyde to the corresponding acid. This Burkholderia vietnamiensis (strain G4 / LMG 22486) (Burkholderia cepacia (strain R1808)) protein is Betaine aldehyde dehydrogenase.